We begin with the raw amino-acid sequence, 267 residues long: MKLRISDAPFPGAPVMVMISGLGGLGGYWLAQQNALSQAYQVVVYDQRGTGDNADTLPEGYTLTDMAQELHRALALHGVQRYAVLGHALGGLVGLELALAYPRAVSALVIINGWLSLGTWTRRCFDARERLLLDSGPAVYVAAQPLFLYPPQWAQENQPRLEAEEALQNAHFQGTENLLRRLWALKTADYRERAARVTTPVQLICARDDVLVPWTCSQALHEALPHSRLDVMTSGGHACNVTAPQRFNSLLYAGLAALTPAPHKETV.

In terms of domain architecture, AB hydrolase-1 spans 14–115 (PVMVMISGLG…SALVIINGWL (102 aa)).

The protein belongs to the AB hydrolase superfamily. Hydrolase RutD family.

The enzyme catalyses carbamate + 2 H(+) = NH4(+) + CO2. Its function is as follows. Involved in pyrimidine catabolism. May facilitate the hydrolysis of carbamate, a reaction that can also occur spontaneously. This chain is Putative carbamate hydrolase RutD, found in Cronobacter turicensis (strain DSM 18703 / CCUG 55852 / LMG 23827 / z3032).